The following is a 421-amino-acid chain: Inner membrane protein YihN (421 aa).

The Periplasmic portion of the chain corresponds to 1–44 (MLTKKKWALFSLLTLCGGTIYKLPSLKDAFYIPMQEYFHLTNGQ). Residues 45–65 (IGNAMSVNSFVTTVGFFLSIY) form a helical membrane-spanning segment. Over 66–73 (FADKLPRR) the chain is Cytoplasmic. The helical transmembrane segment at 74–91 (YTMSFSLIATGLLGVYLT) threads the bilayer. The Periplasmic portion of the chain corresponds to 92-95 (TMPG). The chain crosses the membrane as a helical span at residues 96-118 (YWGILFVWALFGVTCDMMNWPVL). The Cytoplasmic segment spans residues 119-146 (LKSVSRLGNSEQQGRLFGFFETGRGIVD). A helical transmembrane segment spans residues 147–167 (TVVAFSALAVFTWFGSGLLGF). Residue lysine 168 is a topological domain, periplasmic. The helical transmembrane segment at 169–189 (AGIWFYSLIVIAVGIIIFFVL) threads the bilayer. The Cytoplasmic portion of the chain corresponds to 190–220 (NDKEEAPSVEVKKEDGASKNTSMTSVLKDKT). Transmembrane regions (helical) follow at residues 221-241 (IWLI…LTFF) and 242-262 (IPFL…YGII). The Cytoplasmic segment spans residues 263-288 (NQYCLKMIGGPIGGMISDKILKSPSK). 2 consecutive transmembrane segments (helical) span residues 289 to 309 (YLCY…MLPH) and 310 to 330 (ESMP…IVFT). Over 331-354 (QRAVFFAPIGEAKIAENKTGAAMA) the chain is Cytoplasmic. A helical transmembrane segment spans residues 355–375 (LGSFIGYAPAMFCFSLYGYIL). At 376–385 (DLNPGIIGYK) the chain is on the periplasmic side. The chain crosses the membrane as a helical span at residues 386 to 406 (IVFGIMACFAFSGAVVSVMLV). At 407-421 (KRISQRKKEMLAAEA) the chain is on the cytoplasmic side.

Belongs to the major facilitator superfamily.

Its subcellular location is the cell inner membrane. The chain is Inner membrane protein YihN (yihN) from Escherichia coli (strain K12).